Here is a 23-residue protein sequence, read N- to C-terminus: U1-ctenitoxin-Co1a (23 aa).

An intrachain disulfide couples cysteine 10 to cysteine 20.

Expressed by the venom gland.

It is found in the secreted. Insecticidal neurotoxin that reversibly inhibits the N-methyl-D-aspartate (NMDA)-subtype of ionotropic glutamate receptor (GRIN) and inhibits inactivation of insect sodium channels (Nav). In vivo, is highly toxic to insects. The chain is U1-ctenitoxin-Co1a from Ctenus ornatus (Brazilian spider).